Consider the following 257-residue polypeptide: Ribosomal RNA small subunit methyltransferase J (257 aa).

S-adenosyl-L-methionine-binding positions include 107 to 108, 123 to 124, and aspartate 177; these read RD and ER.

This sequence belongs to the methyltransferase superfamily. RsmJ family.

It localises to the cytoplasm. The enzyme catalyses guanosine(1516) in 16S rRNA + S-adenosyl-L-methionine = N(2)-methylguanosine(1516) in 16S rRNA + S-adenosyl-L-homocysteine + H(+). Its function is as follows. Specifically methylates the guanosine in position 1516 of 16S rRNA. The sequence is that of Ribosomal RNA small subunit methyltransferase J from Haemophilus influenzae (strain PittGG).